The primary structure comprises 201 residues: Extracellular superoxide dismutase [Cu-Zn] (201 aa).

An N-terminal signal peptide occupies residues 1 to 42 (MINSFIVIFLSFLIFINYANLVCVEATHVYGRRSHSNGMHGN). Histidine 89, histidine 91, and histidine 106 together coordinate Cu cation. Cysteine 100 and cysteine 192 form a disulfide bridge. Histidine 106, histidine 114, histidine 123, and aspartate 126 together coordinate Zn(2+). Cu cation is bound at residue histidine 163.

It belongs to the Cu-Zn superoxide dismutase family. Homodimer. Requires Cu cation as cofactor. It depends on Zn(2+) as a cofactor.

It localises to the secreted. It is found in the extracellular space. It catalyses the reaction 2 superoxide + 2 H(+) = H2O2 + O2. In terms of biological role, destroys radicals which are normally produced within the cells and which are toxic to biological systems. May act in the parasite defense against phagocyte-generated reactive oxygen species. The chain is Extracellular superoxide dismutase [Cu-Zn] (sod-4) from Onchocerca volvulus.